Consider the following 34-residue polypeptide: Surfactant protein C (34 aa).

Residue C4 is the site of S-palmitoyl cysteine attachment.

It is found in the secreted. It localises to the extracellular space. The protein localises to the surface film. Functionally, pulmonary surfactant associated proteins promote alveolar stability by lowering the surface tension at the air-liquid interface in the peripheral air spaces. The chain is Surfactant protein C (SFTPC) from Canis lupus familiaris (Dog).